Consider the following 94-residue polypeptide: Large ribosomal subunit protein bL25 (94 aa).

The protein belongs to the bacterial ribosomal protein bL25 family. In terms of assembly, part of the 50S ribosomal subunit; part of the 5S rRNA/L5/L18/L25 subcomplex. Contacts the 5S rRNA. Binds to the 5S rRNA independently of L5 and L18.

Its function is as follows. This is one of the proteins that binds to the 5S RNA in the ribosome where it forms part of the central protuberance. The polypeptide is Large ribosomal subunit protein bL25 (Photorhabdus laumondii subsp. laumondii (strain DSM 15139 / CIP 105565 / TT01) (Photorhabdus luminescens subsp. laumondii)).